A 142-amino-acid polypeptide reads, in one-letter code: Hemoglobin subunit zeta (142 aa).

Serine 2 bears the N-acetylserine mark. The Globin domain occupies 2–142 (SLTKTEGTII…VSSVLTEKYR (141 aa)). Threonine 29 carries the phosphothreonine modification. A Phosphoserine modification is found at serine 53. Residue histidine 59 coordinates heme b. Serine 73 and serine 82 each carry phosphoserine. Histidine 88 is a heme b binding site.

Belongs to the globin family. As to quaternary structure, heterotetramer of two zeta chains and beta-type chains.

Functionally, the zeta chain is an alpha-type chain of mammalian embryonic hemoglobin. This chain is Hemoglobin subunit zeta (HBZ1), found in Pan troglodytes (Chimpanzee).